The following is an 87-amino-acid chain: Large ribosomal subunit protein bL27 (87 aa).

Positions 1-21 (MAHKKGGGSTRNGRDSASKRL) are disordered.

This sequence belongs to the bacterial ribosomal protein bL27 family.

The sequence is that of Large ribosomal subunit protein bL27 from Amoebophilus asiaticus (strain 5a2).